The sequence spans 263 residues: Alpha-tubulin N-acetyltransferase 2 (263 aa).

The region spanning M1–F181 is the N-acetyltransferase domain. F115–F128 is a binding site for acetyl-CoA. Disordered stretches follow at residues T191–R223 and E242–W263. Over residues R200–R212 the composition is skewed to low complexity. Residues N253 to W263 are compositionally biased toward basic and acidic residues.

This sequence belongs to the acetyltransferase ATAT1 family. Expressed in touch receptor neurons and in a subset of ciliated neurons, including PDE, ADE, CEP, and OLQ neurons.

It carries out the reaction L-lysyl-[alpha-tubulin] + acetyl-CoA = N(6)-acetyl-L-lysyl-[alpha-tubulin] + CoA + H(+). Functionally, specifically acetylates 'Lys-40' in alpha-tubulin/mec-12 on the lumenal side of microtubules. Promotes microtubule destabilization and accelerates microtubule dynamics; this activity may be independent of acetylation activity. Acetylates alpha-tubulin with a slow enzymatic rate, due to a catalytic site that is not optimized for acetyl transfer. Enters the microtubule through each end and diffuses quickly throughout the lumen of microtubules. Acetylates only long/old microtubules because of its slow acetylation rate since it does not have time to act on dynamically unstable microtubules before the enzyme is released. Required for the maintenance of touch receptor neurons and possibly other type of neurons involved in locomotion. The chain is Alpha-tubulin N-acetyltransferase 2 (atat-2) from Caenorhabditis elegans.